Here is a 217-residue protein sequence, read N- to C-terminus: Orotidine 5'-phosphate decarboxylase (217 aa).

Residues D14, K36, 64–73 (DFKVADIPST), S120, 172–182 (PGVGAQGGNLS), G197, and R198 contribute to the substrate site. K66 serves as the catalytic Proton donor.

This sequence belongs to the OMP decarboxylase family. Type 1 subfamily. Homodimer.

It catalyses the reaction orotidine 5'-phosphate + H(+) = UMP + CO2. The protein operates within pyrimidine metabolism; UMP biosynthesis via de novo pathway; UMP from orotate: step 2/2. In terms of biological role, catalyzes the decarboxylation of orotidine 5'-monophosphate (OMP) to uridine 5'-monophosphate (UMP). The sequence is that of Orotidine 5'-phosphate decarboxylase from Methanococcus maripaludis (strain DSM 14266 / JCM 13030 / NBRC 101832 / S2 / LL).